The primary structure comprises 2752 residues: Piezo-type mechanosensitive ion channel component 2 (2752 aa).

Topologically, residues 1–12 are cytoplasmic; the sequence is MASEVVCGLIFR. Residues 13–24 traverse the membrane as a helical segment; the sequence is LLLPICLAVACA. Residues 25 to 30 are Extracellular-facing; sequence FRYNGL. A helical transmembrane segment spans residues 31-43; sequence SFVYLIYLLLIPL. Residues 44 to 50 are Cytoplasmic-facing; it reads FSEPTKT. A helical membrane pass occupies residues 51 to 76; sequence TMQGHTGRLLKSLCFISLSFLLLHII. The Extracellular segment spans residues 77 to 122; the sequence is FHITLVSLEAQHRIAPGYNCSTWEKTFRQIGFESLKGADAGNGIRV. Asn95 is a glycosylation site (N-linked (GlcNAc...) asparagine). Residues 123–141 traverse the membrane as a helical segment; that stretch reads FVPDIGMFIASLTIWLLCR. Over 142-221 the chain is Cytoplasmic; the sequence is NIVQKPVTDE…KEFIGNMITT (80 aa). Residues 222-237 traverse the membrane as a helical segment; the sequence is AGKVVVTILLGSSGMM. At 238–240 the chain is on the extracellular side; it reads LPS. A helical transmembrane segment spans residues 241 to 258; it reads LTSSVYFFVFLGLCTWWS. The Cytoplasmic segment spans residues 259-264; that stretch reads WCRTFD. Residues 265 to 287 form a helical membrane-spanning segment; sequence PLLFSCLCVLLAIFTAGHLIGLY. The Extracellular portion of the chain corresponds to 288–335; it reads LYQFQFFQEAVPPNDYYARLFGIKSVIQTDCSSTWKIIVNPDLSWYHH. A helical membrane pass occupies residues 336–355; sequence ANPILLLVMYYTLATLIRIW. Residues 356–492 are Cytoplasmic-facing; that stretch reads LQEPLVQDEG…SIKVHAMVSV (137 aa). The disordered stretch occupies residues 446–478; the sequence is STPQYRWEPSDESSEKREEEEEEKEEFEEERSR. Over residues 463-474 the composition is skewed to acidic residues; sequence EEEEEEKEEFEE. A helical transmembrane segment spans residues 493-514; it reads FQFIMKQSYICALIAMMAWSIT. The Extracellular segment spans residues 515-519; it reads YHSWL. Residues 520–531 form a helical membrane-spanning segment; the sequence is TFVLLIWSCTLW. Over 532–535 the chain is Cytoplasmic; that stretch reads MIRN. Residues 536 to 562 traverse the membrane as a helical segment; sequence RRKYAMISSPFMVVYGNLLLILQYIWS. Over 563-583 the chain is Extracellular; sequence FELPEIKKVPGFLEKKEPGEL. The chain crosses the membrane as a helical span at residues 584 to 614; sequence ASKILFTITFWLLLRQHLTEQKALQEKEALL. Residues 615 to 685 lie on the Cytoplasmic side of the membrane; it reads SEVKIGSQEN…GNLVVAMFIK (71 aa). The span at 623–632 shows a compositional bias: acidic residues; that stretch reads ENEEKDEELQ. The tract at residues 623 to 664 is disordered; that stretch reads ENEEKDEELQDIQVEGEPKEEEEEEAKEEKQERKKVEQEEAE. Over residues 649–660 the composition is skewed to basic and acidic residues; it reads KEEKQERKKVEQ. The helical transmembrane segment at 686 to 699 threads the bilayer; it reads YWIYVCGGMFFFVS. Residues 700–705 are Extracellular-facing; the sequence is FEGKIV. A helical transmembrane segment spans residues 706–724; sequence MYKIIYMVLFLFCVALYQV. The Cytoplasmic segment spans residues 725–733; sequence HYEWWRKIL. Residues 734–753 traverse the membrane as a helical segment; the sequence is KYFWMSVVIYTMLVLIFIYT. At 754–785 the chain is on the extracellular side; it reads YQFENFPGLWQNMTGLKKEKLEDLGLKQFTVA. A helical membrane pass occupies residues 786-807; it reads ELFTRIFIPTSFLLVCILHLHY. The Cytoplasmic segment spans residues 808–940; the sequence is FHDRFLELTD…QVFMWWILEL (133 aa). Ser838 carries the post-translational modification Phosphoserine. Residues 862-883 are compositionally biased toward basic and acidic residues; sequence PGEEKLEGYSEKAQKGDLGKDS. Residues 862–902 form a disordered region; the sequence is PGEEKLEGYSEKAQKGDLGKDSEESEEDGEEEEESEEEEET. The segment covering 884 to 902 has biased composition (acidic residues); the sequence is EESEEDGEEEEESEEEEET. The helical transmembrane segment at 941–956 threads the bilayer; sequence HIIKIVSSYIIWVSVK. Over 957–962 the chain is Extracellular; sequence EVSLFN. Residues 963-972 traverse the membrane as a helical segment; it reads YVFLISWAFA. The Cytoplasmic segment spans residues 973–980; the sequence is LPYAKLRR. The helical transmembrane segment at 981–1001 threads the bilayer; sequence LASSVCTVWTCVIIVCKMLYQ. Residues 1002 to 1057 lie on the Extracellular side of the membrane; the sequence is LQTIKPENFSVNCSLPNENQTNIPFNELNKSLLYSAPIDPTEWVGLRKSSPLLVYL. Asn1013 is a glycosylation site (N-linked (GlcNAc...) asparagine). A disulfide bridge links Cys1014 with Cys1192. Residues 1058 to 1082 traverse the membrane as a helical segment; it reads RNNLLMLAILAFEVTIYRHQEYYRG. Residues 1083 to 1123 are Cytoplasmic-facing; that stretch reads RNNLTAPVSRTIFHDITRLHLDDGLINCAKYFINYFFYKFG. Residues 1124 to 1138 form a helical membrane-spanning segment; it reads LETCFLMSVNVIGQR. Topologically, residues 1139–1140 are extracellular; it reads MD. The helical transmembrane segment at 1141–1154 threads the bilayer; it reads FYAMIHACWLIAVL. At 1155-1165 the chain is on the cytoplasmic side; the sequence is YRRRRKAIAEI. Residues 1166–1185 form a helical membrane-spanning segment; it reads WPKYCCFLACIITFQYFICI. At 1186-1222 the chain is on the extracellular side; the sequence is GIPPAPCRDYPWRFKGASFNDNIIKWLYFPDFIVRPN. A helical transmembrane segment spans residues 1223–1243; that stretch reads PVFLVYDFMLLLCASLQRQIF. The Cytoplasmic portion of the chain corresponds to 1244–1297; that stretch reads EDENKAAVRIMAGDNVEICMNLDAASFSQHNPVPDFIHCRSYLDMSKVIIFSYL. Residues 1298 to 1310 form a helical membrane-spanning segment; the sequence is FWFVLTIIFITGT. Over 1311-1316 the chain is Extracellular; the sequence is TRISIF. A helical transmembrane segment spans residues 1317-1329; sequence CMGYLVACFYFLL. Residues 1330 to 1338 are Cytoplasmic-facing; it reads FGGDLLLKP. A helical membrane pass occupies residues 1339–1364; sequence IKSILRYWDWLIAYNVFVITMKNILS. Topologically, residues 1365 to 1413 are extracellular; the sequence is IGACGYIGTLVHNSCWLIQAFSLACTVKGYQMPAANSPCTLPSGEAGII. The helical transmembrane segment at 1414 to 1430 threads the bilayer; that stretch reads WDSICFAFLLLQRRVFM. Residues 1431 to 1921 are Cytoplasmic-facing; that stretch reads SYYFLHVVAD…YAMYNTLVAR (491 aa). Residues 1458 to 1529 are a coiled coil; the sequence is TIVKAVKARI…EREADKQKAK (72 aa). Disordered regions lie at residues 1488-1534, 1593-1636, and 1844-1868; these read QQKY…KKKQ, ALRQ…KKSD, and SQDD…KLGS. Basic residues predominate over residues 1594 to 1615; it reads LRQRHKEKKRSAREERKRRRKG. Residues 1922–1936 form a helical membrane-spanning segment; it reads SEMVCYFVIILNHMV. Over 1937–1943 the chain is Extracellular; the sequence is SASMITL. The chain crosses the membrane as a helical span at residues 1944–1955; sequence LLPILIFLWAML. Residues 1956-1961 lie on the Cytoplasmic side of the membrane; it reads SVPRPS. A helical transmembrane segment spans residues 1962-1983; the sequence is RRFWMMAIVYTEVAIVVKYFFQ. Residues 1984-2016 lie on the Extracellular side of the membrane; the sequence is FGFFPWNKNVEVNKDKPYHPPNIIGVEKKEGYV. A helical membrane pass occupies residues 2017–2035; that stretch reads LYDLIQLLALFFHRSILKC. Residues 2036–2189 are Cytoplasmic-facing; it reads HGLWDEDDMT…HPEYSAVTDV (154 aa). Disordered stretches follow at residues 2047 to 2069 and 2090 to 2135; these read SGMA…DSSD and QQTA…SVLS. Low complexity predominate over residues 2100–2127; sequence GSSSEPSQRSSFSSNRSQRGSTSTRNSS. A helical membrane pass occupies residues 2190–2209; it reads YVLMFLADTVDFIIIVFGFW. At 2210 to 2231 the chain is on the extracellular side; that stretch reads AFGKHSAAADITSSLSEDQVPG. The chain crosses the membrane as a helical span at residues 2232 to 2252; it reads PFLVMVLIQFGTMVVDRALYL. The Cytoplasmic portion of the chain corresponds to 2253–2256; sequence RKTV. Residues 2257 to 2280 traverse the membrane as a helical segment; sequence LGKVIFQVILVFGIHFWMFFILPG. Residues 2281-2289 are Extracellular-facing; sequence VTERKFSQN. A helical membrane pass occupies residues 2290–2312; it reads LVAQLWYFVKCVYFGLSAYQIRC. At 2313-2397 the chain is on the cytoplasmic side; the sequence is GYPTRVLGNF…YPQPRGQKKK (85 aa). A helical transmembrane segment spans residues 2398 to 2421; that stretch reads KVVKYGMGGMIIVLLICIVWFPLL. Residues 2422–2669 lie on the Extracellular side of the membrane; that stretch reads FMSLIKSVAG…PSLGFLAGYG (248 aa). The chain crosses the membrane as a helical span at residues 2670 to 2690; the sequence is IMGLYASVVLVIGKFVREFFS. Residues 2691-2752 are Cytoplasmic-facing; sequence GISHSIMFEE…MIKWTREKTN (62 aa).

This sequence belongs to the PIEZO (TC 1.A.75) family. As to quaternary structure, homotrimer; the homotrimer forms a propeller-shaped Piezo channel with a cation-ion conducting pore. Heterotrimeric interaction may occur between PIEZO1 and PIEZO2. Interacts with STOML3. Interacts with TMC7; the interaction inhibits PIEZO2-conducted mechanically activated currents. Interacts with TMC1; the interaction may be part of the MET complex. Interacts with MDFIC (via C-terminus); the interaction prolongs Piezo channel inactivation. Interacts with MDFI (via C-terminus); the interaction prolongs Piezo channel inactivation.

The protein resides in the cell membrane. The enzyme catalyses Ca(2+)(in) = Ca(2+)(out). Regulated by auxillary subunits MDFIC and MDFI. Channel activity is inhibited by TMEM120A. Phosphatidic acid and lysophosphatidic acid inhibit PIEZO2 channel activity. Its function is as follows. Pore-forming subunit of the mechanosensitive non-specific cation Piezo channel required for rapidly adapting mechanically activated (MA) currents and has a key role in sensing touch and tactile pain. Piezo channels are homotrimeric three-blade propeller-shaped structures that utilize a cap-motion and plug-and-latch mechanism to gate their ion-conducting pathways. Expressed in sensory neurons, is essential for diverse physiological processes, including respiratory control, systemic metabolism, urinary function, and proprioception. Mediates airway stretch sensing, enabling efficient respiration at birth and maintaining normal breathing in adults. It regulates brown and beige adipose tissue morphology and function, preventing systemic hypermetabolism. In the lower urinary tract, acts as a sensor in both the bladder urothelium and innervating sensory neurons being required for bladder-stretch sensing and urethral micturition reflexes, ensuring proper urinary function. Additionally, PIEZO2 serves as the principal mechanotransducer in proprioceptors, facilitating proprioception and coordinated body movements. In inner ear hair cells, PIEZO1/2 subunits may constitute part of the mechanotransducer (MET) non-selective cation channel complex where they may act as pore-forming ion-conducting component in the complex. Required for Merkel-cell mechanotransduction. Plays a major role in light-touch mechanosensation. This Homo sapiens (Human) protein is Piezo-type mechanosensitive ion channel component 2.